Here is a 323-residue protein sequence, read N- to C-terminus: Small ribosomal subunit protein uS2 (323 aa).

Residues 295 to 323 (VVNRDRAGFNKKQPKAEEAAKPAEKKAEK) are disordered.

The protein belongs to the universal ribosomal protein uS2 family.

The chain is Small ribosomal subunit protein uS2 from Mycoplasmoides gallisepticum (strain R(low / passage 15 / clone 2)) (Mycoplasma gallisepticum).